Here is a 570-residue protein sequence, read N- to C-terminus: Rqc2 homolog RqcH (570 aa).

Residues 1-173 form an NFACT-N domain region; it reads MSFDGMFTYG…LPPAQDKISP (173 aa). Residues 179–281 form a hhH domain region; it reads DDILRHLSFQ…ELLDRFYFGK (103 aa). Coiled-coil stretches lie at residues 279 to 336 and 368 to 430; these read FGKA…TANL and TPSE…VEGK. The segment at 282–434 is coiled-coil-M (CCM); that stretch reads AERDRVKQQA…ELVEGKYLRP (153 aa). The segment at 446–570 is NFACT-R; that stretch reads HNPVLETYES…ADTVIKLKKS (125 aa).

This sequence belongs to the NEMF family. Associates with isolated or stalled 50S ribosomal subunits. Binds to RqcP. Interacts with ribosomal protein uL11. Displaced from the 50S subunit by thiostrepton. In crystallized 50S subunits RqcH is variously associated with A/P-site tRNA, P-site tRNA and RqcP, an E-site tRNA or A- and P-site tRNAs and RqcP2(YlmH).

In terms of biological role, key component of the ribosome quality control system (RQC), a ribosome-associated complex that mediates the extraction of incompletely synthesized nascent chains from stalled ribosomes and their subsequent degradation. RqcH recruits Ala-charged tRNA, and with RqcP directs the elongation of stalled nascent chains on 50S ribosomal subunits, leading to non-templated C-terminal alanine extensions (Ala tail). The Ala tail promotes nascent chain degradation. RqcH, RqcP and charged tRNA(Ala) are necessary and sufficient to add an Ala tail to a model stalled nascent peptide; does not add Val. Binds the P-site tRNA in 50S ribosomal subunit, unwinds the anticodon stem and interacts with the splayed anticodon. Selectively binds tRNA(Ala) isoacceptors, even in the absence of the 50S ribosomal subunit. Adds between 1 and at least 8 Ala residues to the nascent chain; detection of the Ala tail requires either deletion of clpP or its inhibition. Binds to 50S ribosomal subunits, at least 30% of which contain a P-site tRNA and thus are obstructed. This Bacillus subtilis (strain 168) protein is Rqc2 homolog RqcH.